A 422-amino-acid chain; its full sequence is Glutamyl-tRNA reductase (422 aa).

Substrate contacts are provided by residues 49 to 52 (TCNR), Ser-107, 112 to 114 (EPQ), and Gln-118. Cys-50 (nucleophile) is an active-site residue. 187–192 (GAGETI) lines the NADP(+) pocket.

Belongs to the glutamyl-tRNA reductase family. Homodimer.

It carries out the reaction (S)-4-amino-5-oxopentanoate + tRNA(Glu) + NADP(+) = L-glutamyl-tRNA(Glu) + NADPH + H(+). It functions in the pathway porphyrin-containing compound metabolism; protoporphyrin-IX biosynthesis; 5-aminolevulinate from L-glutamyl-tRNA(Glu): step 1/2. Catalyzes the NADPH-dependent reduction of glutamyl-tRNA(Glu) to glutamate 1-semialdehyde (GSA). The chain is Glutamyl-tRNA reductase from Stutzerimonas stutzeri (strain A1501) (Pseudomonas stutzeri).